We begin with the raw amino-acid sequence, 258 residues long: Imidazole glycerol phosphate synthase subunit HisF (258 aa).

Catalysis depends on residues Asp11 and Asp130.

It belongs to the HisA/HisF family. In terms of assembly, heterodimer of HisH and HisF.

It localises to the cytoplasm. The catalysed reaction is 5-[(5-phospho-1-deoxy-D-ribulos-1-ylimino)methylamino]-1-(5-phospho-beta-D-ribosyl)imidazole-4-carboxamide + L-glutamine = D-erythro-1-(imidazol-4-yl)glycerol 3-phosphate + 5-amino-1-(5-phospho-beta-D-ribosyl)imidazole-4-carboxamide + L-glutamate + H(+). Its pathway is amino-acid biosynthesis; L-histidine biosynthesis; L-histidine from 5-phospho-alpha-D-ribose 1-diphosphate: step 5/9. IGPS catalyzes the conversion of PRFAR and glutamine to IGP, AICAR and glutamate. The HisF subunit catalyzes the cyclization activity that produces IGP and AICAR from PRFAR using the ammonia provided by the HisH subunit. This is Imidazole glycerol phosphate synthase subunit HisF from Bradyrhizobium sp. (strain BTAi1 / ATCC BAA-1182).